Reading from the N-terminus, the 101-residue chain is Large ribosomal subunit protein uL24 (101 aa).

It belongs to the universal ribosomal protein uL24 family. As to quaternary structure, part of the 50S ribosomal subunit.

Functionally, one of two assembly initiator proteins, it binds directly to the 5'-end of the 23S rRNA, where it nucleates assembly of the 50S subunit. One of the proteins that surrounds the polypeptide exit tunnel on the outside of the subunit. This is Large ribosomal subunit protein uL24 from Thermobifida fusca (strain YX).